The chain runs to 399 residues: Flavohemoprotein (399 aa).

Residues 1 to 138 (MLAEKTRSII…IADIFITVEK (138 aa)) form the Globin domain. T22 is subject to Phosphothreonine. A heme b-binding site is contributed by H85. Catalysis depends on charge relay system residues Y95 and E137. The reductase stretch occupies residues 146–399 (WPGWKPFDIT…FGPKMSTVQV (254 aa)). The FAD-binding FR-type domain occupies 147–264 (PGWKPFDITA…SAPAGDFAIN (118 aa)). FAD is bound by residues Y189 and 207–210 (RHYS). Residue 281–286 (GVGVTP) participates in NADP(+) binding. FAD is bound at residue 389–392 (PFGP).

This sequence belongs to the globin family. Two-domain flavohemoproteins subfamily. In the C-terminal section; belongs to the flavoprotein pyridine nucleotide cytochrome reductase family. It depends on FAD as a cofactor. Heme b serves as cofactor.

The protein resides in the cytoplasm. It catalyses the reaction 2 nitric oxide + NADPH + 2 O2 = 2 nitrate + NADP(+) + H(+). It carries out the reaction 2 nitric oxide + NADH + 2 O2 = 2 nitrate + NAD(+) + H(+). Its function is as follows. Is involved in NO detoxification in an aerobic process, termed nitric oxide dioxygenase (NOD) reaction that utilizes O(2) and NAD(P)H to convert NO to nitrate, which protects the fungus from various noxious nitrogen compounds. Therefore, plays a central role in the inducible response to nitrosative stress. In terms of biological role, in the presence of oxygen and NADH, it has NADH oxidase activity, which leads to the generation of superoxide and H(2)O(2). Under anaerobic conditions, it also exhibits nitric oxide reductase and FAD reductase activities. However, all these reactions are much lower than NOD activity. This chain is Flavohemoprotein (YHB1), found in Saccharomyces cerevisiae (strain ATCC 204508 / S288c) (Baker's yeast).